The chain runs to 182 residues: MGKPNLKDQIKQLYLVLLEEIKIFILTIKLVISKKNVWIISYYHFLKKVVVSKKQILNLSRLLLRFTLLSIFILFVLDLISKYITAPILTGIFNFIFKILISLVNLLYKAIYWIYIIFAIFLHFMNYLLVLLELTLQPIFEWIEIFFFNSLIYFLKLIFLLYSNFEKGILIFLMWLKSRIKK.

The protein resides in the plastid. It localises to the cyanelle. This is an uncharacterized protein from Cyanophora paradoxa.